We begin with the raw amino-acid sequence, 256 residues long: Pimeloyl-[acyl-carrier protein] methyl ester esterase (256 aa).

An AB hydrolase-1 domain is found at 15-242 (HLVLLHGWGL…AAHAPFISHP (228 aa)). Residues tryptophan 22, 82–83 (SL), and 143–147 (FLALQ) contribute to the substrate site. The Nucleophile role is filled by serine 82. Residues aspartate 207 and histidine 235 contribute to the active site. Histidine 235 is a substrate binding site.

Belongs to the AB hydrolase superfamily. Carboxylesterase BioH family. In terms of assembly, monomer.

The protein resides in the cytoplasm. The catalysed reaction is 6-carboxyhexanoyl-[ACP] methyl ester + H2O = 6-carboxyhexanoyl-[ACP] + methanol + H(+). It participates in cofactor biosynthesis; biotin biosynthesis. Its function is as follows. The physiological role of BioH is to remove the methyl group introduced by BioC when the pimeloyl moiety is complete. It allows to synthesize pimeloyl-ACP via the fatty acid synthetic pathway through the hydrolysis of the ester bonds of pimeloyl-ACP esters. The protein is Pimeloyl-[acyl-carrier protein] methyl ester esterase of Citrobacter koseri (strain ATCC BAA-895 / CDC 4225-83 / SGSC4696).